The chain runs to 203 residues: MFKILKQVGDYAKDAAQAAKYIGQGLSVTFDHMRRRPVTVQYPYEKLIPSERFRGRIHFEFDKCIACEVCVRVCPINLPVVDWEFDKSIKKKTLKHYSIDFGVCIFCGNCVEYCPTNCLSMTEEYELATYDRHELNYDNVALGRLPYKVTQDPMVTPLRELAYLPQGVIDPHDLPQGSQRAGEHPEDILERLQAEKQQETADQ.

4Fe-4S ferredoxin-type domains follow at residues 55 to 84 (GRIH…VDWE) and 95 to 124 (KHYS…MTEE). Residues Cys-64, Cys-67, Cys-70, Cys-74, Cys-104, Cys-107, Cys-110, and Cys-114 each contribute to the [4Fe-4S] cluster site.

The protein belongs to the complex I 23 kDa subunit family. NDH-1 is composed of at least 11 different subunits. [4Fe-4S] cluster serves as cofactor.

It localises to the cellular thylakoid membrane. The enzyme catalyses a plastoquinone + NADH + (n+1) H(+)(in) = a plastoquinol + NAD(+) + n H(+)(out). It carries out the reaction a plastoquinone + NADPH + (n+1) H(+)(in) = a plastoquinol + NADP(+) + n H(+)(out). NDH-1 shuttles electrons from an unknown electron donor, via FMN and iron-sulfur (Fe-S) centers, to quinones in the respiratory and/or the photosynthetic chain. The immediate electron acceptor for the enzyme in this species is believed to be plastoquinone. Couples the redox reaction to proton translocation, and thus conserves the redox energy in a proton gradient. This Picosynechococcus sp. (strain ATCC 27264 / PCC 7002 / PR-6) (Agmenellum quadruplicatum) protein is NAD(P)H-quinone oxidoreductase subunit I (ndhI).